We begin with the raw amino-acid sequence, 482 residues long: Reduced viability upon starvation protein 167 (482 aa).

Position 2 is an N-acetylserine (serine 2). The BAR domain occupies 17–254 (FRQKFKMGEQ…YFDLNSDIVE (238 aa)). Coiled coils occupy residues 31–64 (VYEDAERRFQELEQETKKLSEESKRYSTAVNGML) and 174–204 (AKDEERLYKAQAQVEVAQQEYDYYNDLLKTQ). A Glycyl lysine isopeptide (Lys-Gly) (interchain with G-Cter in ubiquitin) cross-link involves residue lysine 242. Residues serine 299, serine 321, and serine 379 each carry the phosphoserine; by FUS3 and PHO85 modification. Positions 382-407 (LTGLGFQQSPQQQQGPPPAYSNPLTS) are disordered. One can recognise an SH3 domain in the interval 421–482 (PGVETVTALY…PGNYVQLNKN (62 aa)). Lysine 481 participates in a covalent cross-link: Glycyl lysine isopeptide (Lys-Gly) (interchain with G-Cter in ubiquitin).

As to quaternary structure, binds to actin. Interacts with ABP1, GYL1, GYP5, PCL2 and YBR108W. Post-translationally, phosphorylated redundantly by cyclin-dependent kinase PHO85 in association with PCL1,2-type cyclins or by MAP kinase FUS3. Phosphorylation inhibits interaction with complexes involved in actin cytoskeleton function.

Its subcellular location is the cytoplasm. The protein localises to the cytoskeleton. Component of a cytoskeletal structure that is required for the formation of endocytic vesicles at the plasma membrane level. Could be implicated in cytoskeletal reorganization in response to environmental stresses and could act in the budding site selection mechanism. The protein is Reduced viability upon starvation protein 167 (RVS167) of Saccharomyces cerevisiae (strain ATCC 204508 / S288c) (Baker's yeast).